Reading from the N-terminus, the 1461-residue chain is Neogenin (1461 aa).

A signal peptide spans methionine 1 to alanine 33. The Extracellular segment spans residues alanine 34 to leucine 1105. 4 Ig-like C2-type domains span residues proline 52 to serine 141, proline 152 to lysine 238, proline 243 to threonine 336, and proline 341 to isoleucine 426. N-linked (GlcNAc...) asparagine glycosylation occurs at asparagine 73. 3 cysteine pairs are disulfide-bonded: cysteine 74–cysteine 129, cysteine 173–cysteine 221, and cysteine 270–cysteine 320. N-linked (GlcNAc...) asparagine glycosylation occurs at asparagine 210. An N-linked (GlcNAc...) asparagine glycan is attached at asparagine 326. Residues cysteine 362 and cysteine 410 are joined by a disulfide bond. 6 Fibronectin type-III domains span residues alanine 441–glutamate 535, proline 541–aspartate 631, alanine 636–serine 731, valine 741–threonine 831, proline 856–leucine 952, and proline 957–alanine 1054. Residues asparagine 470 and asparagine 489 are each glycosylated (N-linked (GlcNAc...) asparagine). Residues asparagine 639 and asparagine 715 are each glycosylated (N-linked (GlcNAc...) asparagine). Residue asparagine 909 is glycosylated (N-linked (GlcNAc...) asparagine). The interval glycine 1041–threonine 1097 is disordered. Residues proline 1052–proline 1061 are compositionally biased toward basic and acidic residues. The segment covering serine 1087–threonine 1097 has biased composition (polar residues). Residues leucine 1106–phenylalanine 1126 form a helical membrane-spanning segment. At cysteine 1127 to alanine 1461 the chain is on the cytoplasmic side. Disordered regions lie at residues lysine 1138–proline 1160, proline 1174–serine 1206, proline 1235–serine 1276, and threonine 1289–serine 1381. Phosphoserine is present on residues serine 1178 and serine 1194. Positions proline 1191 to serine 1206 are enriched in polar residues. Residue threonine 1198 is modified to Phosphothreonine. Polar residues-rich tracts occupy residues threonine 1289 to threonine 1322 and alanine 1330 to proline 1349. The segment covering alanine 1366–tyrosine 1375 has biased composition (pro residues). Position 1401 is a phosphoserine (serine 1401). The residue at position 1404 (threonine 1404) is a Phosphothreonine. Residues serine 1432, serine 1434, and serine 1435 each carry the phosphoserine modification.

This sequence belongs to the immunoglobulin superfamily. DCC family. In terms of assembly, interacts with MYO10. Interacts with RGMA and RGMB. Interacts with BMP2, BMP4, BMP6, and BMP7. In terms of tissue distribution, widely expressed and also in cancer cell lines.

It is found in the cell membrane. In terms of biological role, multi-functional cell surface receptor regulating cell adhesion in many diverse developmental processes, including neural tube and mammary gland formation, myogenesis and angiogenesis. Receptor for members of the BMP, netrin, and repulsive guidance molecule (RGM) families. Netrin-Neogenin interactions result in a chemoattractive axon guidance response and cell-cell adhesion, the interaction between NEO1/Neogenin and RGMa and RGMb induces a chemorepulsive response. The polypeptide is Neogenin (NEO1) (Homo sapiens (Human)).